Here is a 131-residue protein sequence, read N- to C-terminus: MINDLVSDALTRIRNAGMRRLDVTTLVHSKSVEALANILVEKGYIESCNVVEDGVKKTINVVLKYSDNGKSVINEMKRISKPGRRVYKGKDEIKRFKNGYGTIIVSTSHGVLPNDKAYALGVGGEVMCTVW.

Belongs to the universal ribosomal protein uS8 family. In terms of assembly, part of the 30S ribosomal subunit. Contacts proteins S5 and S12.

Functionally, one of the primary rRNA binding proteins, it binds directly to 16S rRNA central domain where it helps coordinate assembly of the platform of the 30S subunit. The chain is Small ribosomal subunit protein uS8 from Sulfurimonas denitrificans (strain ATCC 33889 / DSM 1251) (Thiomicrospira denitrificans (strain ATCC 33889 / DSM 1251)).